Consider the following 215-residue polypeptide: Nascent polypeptide-associated complex subunit alpha-2 (215 aa).

The tract at residues 1 to 51 is disordered; it reads MPGEATETVPATEQELPQSQAETGSGTASDSGESVPGIEEQDSTQTTTQKA. Polar residues predominate over residues 9-32; the sequence is VPATEQELPQSQAETGSGTASDSG. 2 positions are modified to phosphoserine: S43 and S132. Residues 70-135 form the NAC-A/B domain; that stretch reads SRSEKRARKA…AKIQDLSQQA (66 aa). K142 bears the N6-acetyllysine; alternate mark. Residue K142 forms a Glycyl lysine isopeptide (Lys-Gly) (interchain with G-Cter in SUMO2); alternate linkage. Phosphothreonine is present on T161. Phosphoserine occurs at positions 166, 186, 191, and 203. The region spanning 176 to 213 is the UBA domain; that stretch reads VEVKDVKLVMSQANVSRAKAVRALKNNSNDIVNAIMEL. Residue T214 is modified to Phosphothreonine.

The protein belongs to the NAC-alpha family. Part of the nascent polypeptide-associated complex (NAC), consisting of NACA and BTF3. NAC associates with ribosomes through the BTF3 subunit. Both subunits can contact nascent polypeptide chains. Expressed specifically in testis and skeletal muscle.

Its subcellular location is the cytoplasm. The protein resides in the nucleus. In terms of biological role, prevents inappropriate targeting of non-secretory polypeptides to the endoplasmic reticulum (ER). Binds to nascent polypeptide chains as they emerge from the ribosome and blocks their interaction with the signal recognition particle (SRP), which normally targets nascent secretory peptides to the ER. Also reduces the inherent affinity of ribosomes for protein translocation sites in the ER membrane (M sites). In Homo sapiens (Human), this protein is Nascent polypeptide-associated complex subunit alpha-2 (NACA2).